A 327-amino-acid chain; its full sequence is Lipoyl synthase (327 aa).

The [4Fe-4S] cluster site is built by Cys66, Cys71, Cys77, Cys92, Cys96, Cys99, and Ser306. The Radical SAM core domain occupies 78–295 (FSKGTATFMI…EKEAYELGFS (218 aa)).

It belongs to the radical SAM superfamily. Lipoyl synthase family. The cofactor is [4Fe-4S] cluster.

The protein localises to the cytoplasm. The catalysed reaction is [[Fe-S] cluster scaffold protein carrying a second [4Fe-4S](2+) cluster] + N(6)-octanoyl-L-lysyl-[protein] + 2 oxidized [2Fe-2S]-[ferredoxin] + 2 S-adenosyl-L-methionine + 4 H(+) = [[Fe-S] cluster scaffold protein] + N(6)-[(R)-dihydrolipoyl]-L-lysyl-[protein] + 4 Fe(3+) + 2 hydrogen sulfide + 2 5'-deoxyadenosine + 2 L-methionine + 2 reduced [2Fe-2S]-[ferredoxin]. It functions in the pathway protein modification; protein lipoylation via endogenous pathway; protein N(6)-(lipoyl)lysine from octanoyl-[acyl-carrier-protein]: step 2/2. Its function is as follows. Catalyzes the radical-mediated insertion of two sulfur atoms into the C-6 and C-8 positions of the octanoyl moiety bound to the lipoyl domains of lipoate-dependent enzymes, thereby converting the octanoylated domains into lipoylated derivatives. The polypeptide is Lipoyl synthase (Neisseria meningitidis serogroup B (strain ATCC BAA-335 / MC58)).